Reading from the N-terminus, the 719-residue chain is Leucine-rich repeat and fibronectin type-III domain-containing protein 5 (719 aa).

The first 17 residues, 1–17, serve as a signal peptide directing secretion; the sequence is MEKFLFYLFLIGIAVRA. Residues 18 to 51 form the LRRNT domain; sequence QICPKRCVCQILSPNLATLCAKKGLLFVPPNIDR. Residues 18 to 529 are Extracellular-facing; it reads QICPKRCVCQ…MQSQFLGGTM (512 aa). LRR repeat units follow at residues 52-73, 76-97, 100-121, 124-145, 148-169, 172-193, and 196-217; these read RTVE…DFAN, SLVD…AFAD, NLRA…MFSG, NLHH…AFDD, ALEE…AVEK, SLHT…TFSH, and KMTR…PLFQ. N-linked (GlcNAc...) asparagine glycosylation is present at N73. The 47-residue stretch at 240 to 286 folds into the LRRCT domain; sequence NPLHCNCELLWLRRLSREDDLETCASPALLTGRYFWSIPEEEFLCEP. The 87-residue stretch at 287-373 folds into the Ig-like domain; sequence PLITRHTHEM…GEATQTVDLH (87 aa). An intrachain disulfide couples C308 to C357. N-linked (GlcNAc...) asparagine glycans are attached at residues N330, N339, N382, N406, and N452. The segment at 385-416 is disordered; sequence NHIHEPDPGSSDISTSTKSGSNASSSNGDTKM. The segment covering 393-412 has biased composition (low complexity); it reads GSSDISTSTKSGSNASSSNG. Residues 414–503 enclose the Fibronectin type-III domain; the sequence is TKMSQDKIVV…ITSLTATRVV (90 aa). The helical transmembrane segment at 530–550 threads the bilayer; sequence IIIIGGIIVASVLVFIIILMI. At 551 to 719 the chain is on the cytoplasmic side; it reads RYKVCNNNGQ…VQETQRLESI (169 aa). Residues 614 to 627 show a composition bias toward low complexity; that stretch reads SETCSSQDSSTTTS. The disordered stretch occupies residues 614 to 719; it reads SETCSSQDSS…VQETQRLESI (106 aa). 3 stretches are compositionally biased toward polar residues: residues 628–641, 654–677, and 702–713; these read ALPP…PVSQ, EPQS…TALQ, and LLTNVDQNVQET.

This sequence belongs to the LRFN family. As to quaternary structure, can form heteromeric complexes with LRFN1, LRFN2, LRFN3 and LFRN4. Able to form homomeric complexes across cell junctions, between adjacent cells. Does not interact with DLG1, DLG2 or DLG3. Does not interact with DLG4. Post-translationally, glycosylated. Predominantly expressed in the brain, with a weak, but broad expression in the cerebral cortex and diencephalic nuclei. Strongly expressed in both the pyramidal layer and the dentate gyrus of the hippocampus. Also detected in other parts of the central nervous system, including the olfactory bulb, pons, cerebellum, and medulla oblongata, as well as in the peripheral nervous system, such as the ganglia of cranial nerves and the dorsal root ganglion during gestation.

It is found in the membrane. Cell adhesion molecule that mediates homophilic cell-cell adhesion in a Ca(2+)-independent manner. Promotes neurite outgrowth in hippocampal neurons. This is Leucine-rich repeat and fibronectin type-III domain-containing protein 5 (Lrfn5) from Mus musculus (Mouse).